The sequence spans 67 residues: Protein SlyX homolog (67 aa).

This sequence belongs to the SlyX family.

This is Protein SlyX homolog from Thiobacillus denitrificans (strain ATCC 25259 / T1).